A 1033-amino-acid polypeptide reads, in one-letter code: MKKVDVKESAVGRETRIRKQWNEQSIFEQSIQNREGAQSFVFYEGPPTANGLPHVGHALGRTIKDVVARYKTMVGYKVLRKAGWDTHGLPVELGVEKQLGISGKHEIEEYGIEPFIQKCKESVFTYEKQWREFTESIGYWVDMDDPYVTLENPYIESVWHILGTIHEKGLLYKGHRVSPYCPSCQTSLSSHEVAQGYKTVKDLSATVKFEVKDSENEYFLGWTTTPWTLPANVALAVHPNMEYVKAKQEGHVYIVAKERVQDVLKEDYEVLSVHKGEELVNTSYMPPFPMKEVTNGYHVIAADFVTADSGTGLVHIAPAYGEDDYRVVQSEGLSFLHVVDEKGEYTEAVPFLKGKFVKDCDVDIVRYLAKEGLLYHKEKYEHSYPHCWRCDSPLLYYAGESWLIRTTAIKDTFLQNNDSVTWYPDHMKHGRFGKFLENMVDWNISRNRYWGTPLNVWECESCDHQFAPKSIADLRKHSTKETPEDLELHKPYVDEVQVCCEKCGGTMTRTPEVIDVWFDSGSMPFAQYHYPFENKELFEEQFPADVIAEGIDQTRGWFYSLLAVSALYTGKAPYKRVLSLGHVLDEEGQKMSKSKGNALDPVDLVEKFGADALRWALLVDSAPWNAKRFSERTVLEAKSKFVDTLINVYSFYVLYANLDEYNPHETYDVKRTKLDEWVLSRLHSTTKKVRTALDDYQFTNAAREIAALVDEVSNWYVRRSRNRFWESGMNAEKAAAYETLHEVLVTISKLIAPFTPFVAEDIHVNLTGNSVHLEDYPVVNESLLQPKLEAEMNAVLQVVELGRSNRNQHSLKVKQPLAELVLLEHNENDMDWESYRDIVMDELNVKTFHVELDETKYTSYQLKLNFKKAGPKFGKNVNAVNGWLKQLSQAEVQNFVSTERAVYEVASGEEVVVTAEDVMVEKVAKSGFSNTTNGQYTVMLDTNVTEELLQEGVAREFIRAVQEYRKQLNLPVNLRVDVILDTEEELQQTLTNHKELLKENLLVKQFTFGHLTNEDDELSLGETKVRIKLSSAN.

The 'HIGH' region motif lies at 47-57; the sequence is PTANGLPHVGH. Positions 590–594 match the 'KMSKS' region motif; it reads KMSKS. Position 593 (lysine 593) interacts with ATP.

This sequence belongs to the class-I aminoacyl-tRNA synthetase family. IleS type 2 subfamily. As to quaternary structure, monomer. The cofactor is Zn(2+).

It localises to the cytoplasm. The enzyme catalyses tRNA(Ile) + L-isoleucine + ATP = L-isoleucyl-tRNA(Ile) + AMP + diphosphate. Functionally, catalyzes the attachment of isoleucine to tRNA(Ile). As IleRS can inadvertently accommodate and process structurally similar amino acids such as valine, to avoid such errors it has two additional distinct tRNA(Ile)-dependent editing activities. One activity is designated as 'pretransfer' editing and involves the hydrolysis of activated Val-AMP. The other activity is designated 'posttransfer' editing and involves deacylation of mischarged Val-tRNA(Ile). The sequence is that of Isoleucine--tRNA ligase from Bacillus thuringiensis (strain Al Hakam).